Reading from the N-terminus, the 1338-residue chain is Thioester-containing protein 1 allele R1 (1338 aa).

The signal sequence occupies residues 1–21 (MWQFIRSRILTVIIFIGAAHG). Residues N68, N199, N242, N312, and N481 are each glycosylated (N-linked (GlcNAc...) asparagine). A may contain the cleavage site region spans residues 580–609 (ENEFDIFHSLGLFARTLDDILFDSANEKTG). N637, N728, and N813 each carry an N-linked (GlcNAc...) asparagine glycan. Positions 859-862 (CGEQ) form a cross-link, isoglutamyl cysteine thioester (Cys-Gln). N-linked (GlcNAc...) asparagine glycans are attached at residues N919 and N1065. 3 disulfides stabilise this stretch: C1217–C1283, C1326–C1338, and C1329–C1334.

In terms of assembly, heterodimer of a TEP1-N chain and an TEP1-C chain non-covalently linked. Forms a complex composed of TEP1-N and TEP1-C heterodimer, LRIM1 and APL1C; the interaction stabilizes TEP1-N and TEP1-C heterodimer, prevents its binding to tissues while circulating in the hemolymph and protects the thioester bond from hydrolysis. Mature TEP1 and to a lesser extent full-length TEP1 interact with SPCLIP1; the interaction is induced by microbial infection. Post-translationally, in the hemolymph, the full-length protein is cleaved by an unknow protease into a 75kDa N-terminal (TEP1-N) chain and an 80kDa C-terminal (TEP1-C) chain which remain non-covalently linked. The TEP1-C chain contains the thioester bond which covalently binds to the pathogen surface. Cleavage is induced by bacterial infection or aseptic wound injury. During embryonic and pupal development, the cleaved form is the predominant form. In terms of processing, N-glycosylated.

It is found in the secreted. Plays an essential role in the innate immune response against bacteria, fungi and protozoa infection. After proteolytic cleavage, the protein C-terminus binds covalently through a thioester bond to the pathogen surface resulting in pathogen clearance either by melanization or lysis. Initiate the recruitment and activation of a cascade of proteases, mostly of CLIP-domain serine proteases, which leads to the proteolytic cleavage of the prophenoloxidase (PPO) into active phenoloxidase (PO), the rate-limiting enzyme in melanin biosynthesis. In response to parasite P.berghei-mediated infection, binds to and mediates killing of ookinetes, as they egress from midgut epithelial cells into the basal labyrinth, by both lysis and melanization. During bacterial infection, binds to both Gram-positive and Gram-negative bacteria but only promotes phagocytosis of Gram-negative bacteria. Promotes the accumulation of SPCLIP1 onto the surface of P.berghei ookinetes and bacterium E.coli which leads to the melanization of the pathogen. Recruits CLIPA2 to bacteria surface. In response to bacterial infection, required for periostial hemocyte aggregation, but not for the aggregation of sessile hemocytes in non-periostial regions. During the late stage of fungus B.bassiana-mediated infection, required for the initiation of hyphae melanization by binding to the surface of hyphae and recruiting prophenoloxidase PPO to them. Plays a role in male fertility by binding to defective sperm cells and promoting their removal during spermatogenesis. Its function is as follows. Binds to and mediates killing of parasite P.bergei ookinetes by lysis and melanization. Functionally, binds covalently through a thioester bond to the pathogen surface resulting in pathogen clearance. This chain is Thioester-containing protein 1 allele R1, found in Anopheles gambiae (African malaria mosquito).